Consider the following 332-residue polypeptide: tRNA dimethylallyltransferase (332 aa).

Residue 17 to 24 (GPTCSGKS) coordinates ATP. Substrate is bound at residue 19–24 (TCSGKS). Interaction with substrate tRNA regions lie at residues 42-45 (DSMQ) and 166-170 (QRISR).

It belongs to the IPP transferase family. In terms of assembly, monomer. Mg(2+) is required as a cofactor.

The enzyme catalyses adenosine(37) in tRNA + dimethylallyl diphosphate = N(6)-dimethylallyladenosine(37) in tRNA + diphosphate. Catalyzes the transfer of a dimethylallyl group onto the adenine at position 37 in tRNAs that read codons beginning with uridine, leading to the formation of N6-(dimethylallyl)adenosine (i(6)A). The sequence is that of tRNA dimethylallyltransferase from Gluconobacter oxydans (strain 621H) (Gluconobacter suboxydans).